Reading from the N-terminus, the 1304-residue chain is DNA-directed RNA polymerase subunit beta' (1304 aa).

Zn(2+) contacts are provided by C60, C62, C75, and C78. Mg(2+) contacts are provided by D541, D543, and D545. Zn(2+) contacts are provided by C887, C963, C970, and C973.

Belongs to the RNA polymerase beta' chain family. In terms of assembly, the RNAP catalytic core consists of 2 alpha, 1 beta, 1 beta' and 1 omega subunit. When a sigma factor is associated with the core the holoenzyme is formed, which can initiate transcription. The cofactor is Mg(2+). Zn(2+) is required as a cofactor.

The enzyme catalyses RNA(n) + a ribonucleoside 5'-triphosphate = RNA(n+1) + diphosphate. Its function is as follows. DNA-dependent RNA polymerase catalyzes the transcription of DNA into RNA using the four ribonucleoside triphosphates as substrates. The chain is DNA-directed RNA polymerase subunit beta' from Acidothermus cellulolyticus (strain ATCC 43068 / DSM 8971 / 11B).